The chain runs to 611 residues: Protein PES4 (611 aa).

Positions 37–81 (FNPVVTPIRPDDYHEKTSRSSSSSHSDSPEFLRINNNKSGHKNGK) are disordered. Positions 45 to 54 (RPDDYHEKTS) are enriched in basic and acidic residues. 4 consecutive RRM domains span residues 91–169 (VPLF…PSLR), 179–247 (TNVF…GKKI), 303–379 (NSIF…RAQD), and 393–471 (STLF…WERQ).

The protein resides in the nucleus. The protein is Protein PES4 (PES4) of Saccharomyces cerevisiae (strain ATCC 204508 / S288c) (Baker's yeast).